The sequence spans 530 residues: TNF receptor-associated factor 6 (530 aa).

Positions 1-362 are interaction with TAX1BP1; the sequence is MSLLNCENSC…EAQQCNGIYI (362 aa). Residues 70 to 109 form an RING-type zinc finger; that stretch reads CPICLMALREAVQTPCGHRFCKACIIKSIRDAGHKCPVDN. Residue Lys-124 forms a Glycyl lysine isopeptide (Lys-Gly) (interchain with G-Cter in SUMO); alternate linkage. Residue Lys-124 forms a Glycyl lysine isopeptide (Lys-Gly) (interchain with G-Cter in ubiquitin); alternate linkage. Residue Lys-142 forms a Glycyl lysine isopeptide (Lys-Gly) (interchain with G-Cter in SUMO) linkage. 2 consecutive TRAF-type zinc fingers follow at residues 150 to 202 and 203 to 259; these read DHQV…EEKE and IHDQ…NHLA. The stretch at 299–356 forms a coiled coil; sequence EDPNYEETIKQLESRLVRQDHQIRELTAKMETQSMYVGELKRTIRTLEDKVAEMEAQQ. Residue Lys-327 forms a Glycyl lysine isopeptide (Lys-Gly) (interchain with G-Cter in ubiquitin) linkage. Residues 358–507 form the MATH domain; it reads NGIYIWKIGN…DDTLLVRCEV (150 aa). The tract at residues 363-530 is interaction with TANK; sequence WKIGNFGMHL…FQPRSTDAGV (168 aa). Lys-461 participates in a covalent cross-link: Glycyl lysine isopeptide (Lys-Gly) (interchain with G-Cter in SUMO).

The protein belongs to the TNF receptor-associated factor family. A subfamily. In terms of assembly, homotrimer. Homooligomer. N-terminal region is dimeric while C-terminal region is trimeric; maybe providing a mode of oligomerization. Upon IL1B treatment, forms a complex with PELI1, IRAK1, IRAK4 and MYD88; this complex recruits MAP3K7/TAK1, TAB1 and TAB2 to mediate NF-kappa-B activation. Direct binding of SMAD6 to PELI1 prevents the complex formation and hence negatively regulates IL1R-TLR signaling and eventually NF-kappa-B-mediated gene expression. Binds to TNFRSF5/CD40 and TNFRSF11A/RANK. Associates with NGFR, TNFRSF17, IRAK2, IRAK3, PELI2, PELI3, RIPK2, MAP3K1, MAP3K5, MAP3K14, CSK, TRAF, TRAF-interacting protein TRIP and TNF receptor associated protein TDP2. Binds UBE2V1. Interacts with MAVS/IPS1. Interacts with TAX1BP1; this interaction mediates deubiquitination of TRAF6 and inhibition of NF-kappa-B activation. Interacts with IL17R. Interacts with SQSTM1 bridging NTRK1 and NGFR. Forms a ternary complex with SQSTM1 and PRKCZ. Interacts with IL1RL1. Interacts with AJUBA. Interacts with TRAFD1. Interacts with TICAM2. Interacts with ZFAND5. Interacts with ARRB1 and ARRB2. Interacts with MAP3K7 and TAB1/MAP3K7IP1; during IL-1 signaling. Interacts with UBE2N. Interacts with TGFBR1, HDAC1 and RANGAP1. Interacts with AKT1, AKT2 and AKT3. Interacts (via TRAF domains) with NUMBL (via C-terminal). Interacts (via TRAF domains) with DYNC2I2 (via WD domains). Interacts with RBCK1. Interacts with LIMD1 (via LIM domains). Interacts with RSAD2/viperin. Interacts with IFIT3 (via N-terminus). Interacts (via C-terminus) with EIF2AK2/PKR (via the kinase catalytic domain). Interacts with CARD14. Interacts with CD40 and MAP3K8; the interaction is required for ERK activation. Interacts with TICAM1 and this interaction is enhanced in the presence of WDFY1. Interacts with TANK; this interaction increases in response to DNA damage. Interacts with USP10; this interaction increases in response to DNA damage. Interacts with ZC3H12A; this interaction increases in response to DNA damage and is stimulated by TANK. Interacts with WDFY3. Interacts with TRIM13. Interacts with GPS2. Interacts (via C-terminus) with SASH1. Interacts with LRRC19. Interacts with IL17RA and TRAF3IP2. Interacts with TOMM70. Interacts with AMBRA1; interaction is required to mediate 'Lys-63'-linked ubiquitination of ULK1. Interacts with CRBN; this interaction inhibits TLR4-mediated signaling by preventing TRAF6-mediated ubiquitination of ECSIT. (Microbial infection) Interacts (via N-terminal RING domain) with Toxoplasma gondii GRA7; the interaction plays a role in GRA7-induced pro-inflammatory cytokine production in mouse macrophages. Post-translationally, sumoylated on Lys-124, Lys-142 and Lys-461 with SUMO1. Polyubiquitinated on Lys-124 by TRAF3IP2; after cell stimulation with IL17A. Polyubiquitinated; after cell stimulation with IL1B or TGFB. This ligand-induced cell stimulation leads to dimerization/oligomerization of TRAF6 molecules, followed by auto-ubiquitination which involves UBE2N and UBE2V1 and leads to TRAF6 activation. This 'Lys-63' site-specific poly-ubiquitination appears to be associated with the activation of signaling molecules. Endogenous autoubiquitination occurs only for the cytoplasmic form. Deubiquitinated by USP10 in a TANK-dependent manner, leading to the negative regulation of NF-kappa-B signaling upon DNA damage. LRRC19 induces 'Lys-63' ubiquitination. Ubiquitinated at Lys-327 by the SCF(FBXL2) complex, leading to its degradation by the proteasome. In terms of tissue distribution, highly expressed in brain, lung, liver, skeletal muscle, and kidney; lower expression in heart, spleen, and testis.

It localises to the cytoplasm. The protein localises to the cell cortex. The protein resides in the nucleus. Its subcellular location is the lipid droplet. The catalysed reaction is S-ubiquitinyl-[E2 ubiquitin-conjugating enzyme]-L-cysteine + [acceptor protein]-L-lysine = [E2 ubiquitin-conjugating enzyme]-L-cysteine + N(6)-ubiquitinyl-[acceptor protein]-L-lysine.. It participates in protein modification; protein ubiquitination. Its function is as follows. E3 ubiquitin ligase that, together with UBE2N and UBE2V1, mediates the synthesis of 'Lys-63'-linked-polyubiquitin chains conjugated to proteins, such as ECSIT, IKBKG, IRAK1, AKT1 and AKT2. Also mediates ubiquitination of free/unanchored polyubiquitin chain that leads to MAP3K7 activation. Leads to the activation of NF-kappa-B and JUN. Seems to also play a role in dendritic cells (DCs) maturation and/or activation. Represses c-Myb-mediated transactivation, in B-lymphocytes. Adapter protein that seems to play a role in signal transduction initiated via TNF receptor, IL-1 receptor and IL-17 receptor. Regulates osteoclast differentiation by mediating the activation of adapter protein complex 1 (AP-1) and NF-kappa-B, in response to RANK-L stimulation. Together with MAP3K8, mediates CD40 signals that activate ERK in B-cells and macrophages, and thus may play a role in the regulation of immunoglobulin production. Acts as a regulator of the JNK and NF-kappa-B signaling pathways by initiating assembly of heterotypic 'Lys-63'-/'Lys-48'-linked branched ubiquitin chains that are then recognized by TAB2: TRAF6 catalyzes initial 'Lys-63'-linked-polyubiquitin chains that are then branched via 'Lys-48'-linked polyubiquitin by HUWE1. 'Lys-63'-/'Lys-48'-linked branched ubiquitin chains protect 'Lys-63'-linkages from CYLD deubiquitination. Also participates in the TCR signaling by ubiquitinating LAT. This Mus musculus (Mouse) protein is TNF receptor-associated factor 6 (Traf6).